A 1243-amino-acid chain; its full sequence is Serine/threonine-protein kinase/endoribonuclease IRE1 (1243 aa).

Positions 1–35 (MMRRPPSQGRWSASHQKLLLAFAFILIPWLQLADA) are cleaved as a signal peptide. Topologically, residues 36 to 585 (QQQPQQPQIR…VKALPQSAAN (550 aa)) are lumenal. Disordered regions lie at residues 70 to 132 (HAAP…KPNY) and 149 to 172 (QPVR…GLAS). Residues 73 to 85 (PDVHPEAKFDTVN) show a composition bias toward basic and acidic residues. Residues 90–99 (QQSTASPQQH) are compositionally biased toward polar residues. Low complexity predominate over residues 163–172 (SSSAASGLAS). Asn-226, Asn-470, and Asn-554 each carry an N-linked (GlcNAc...) asparagine glycan. A helical transmembrane segment spans residues 586–606 (SVIDFVSNPILIIFLIGSLIY). Residues 607–1243 (NEKKLRRSYH…FREYYEPAGL (637 aa)) are Cytoplasmic-facing. The segment at 638-765 (GDESGDDKDG…QSHENDPALT (128 aa)) is disordered. Low complexity predominate over residues 650–660 (PSSPSPRSQPQ). Over residues 674–693 (ERNAGDQDKVKDNRSLHDVS) the composition is skewed to basic and acidic residues. Over residues 732–749 (KKKKAHRGRRGGVKHRKG) the composition is skewed to basic residues. The 297-residue stretch at 809–1105 (VDTDVELGMG…SREVMAHPFF (297 aa)) folds into the Protein kinase domain. Residues 815-823 (LGMGSNGTV) and Lys-837 contribute to the ATP site. ADP contacts are provided by Ser-819, Lys-837, Glu-881, and Cys-883. Residue Asp-931 is the Proton acceptor of the active site. The Mg(2+) site is built by Asn-936 and Asp-953. The 133-residue stretch at 1108-1240 (PKKRLAFLCD…TDRFREYYEP (133 aa)) folds into the KEN domain.

The protein belongs to the protein kinase superfamily. Ser/Thr protein kinase family. Mg(2+) serves as cofactor. In terms of processing, autophosphorylated mainly on serine residues; phosphorylation enables nucleotide binding by the active site.

It is found in the endoplasmic reticulum membrane. It carries out the reaction L-seryl-[protein] + ATP = O-phospho-L-seryl-[protein] + ADP + H(+). It catalyses the reaction L-threonyl-[protein] + ATP = O-phospho-L-threonyl-[protein] + ADP + H(+). Functionally, senses unfolded proteins in the lumen of the endoplasmic reticulum via its N-terminal domain which leads to enzyme auto-activation. The active endoribonuclease domain splices precursor mRNAs to produce their mature form which then induces transcription of UPR target genes. This chain is Serine/threonine-protein kinase/endoribonuclease IRE1, found in Hypocrea jecorina (strain QM6a) (Trichoderma reesei).